An 834-amino-acid chain; its full sequence is ABC transporter A family member 11 (834 aa).

7 consecutive transmembrane segments (helical) span residues 35-55 (FFIL…ILNN), 188-208 (MPMI…ILIV), 235-255 (VFDY…LYSF), 269-289 (FLLF…LQFI), 297-319 (NKWL…SVAF), 324-346 (PLIV…LKAL), and 355-375 (SYTI…IYFI). The 242-residue stretch at 452–693 (LDKPSIIERC…YGSGYTIDII (242 aa)) folds into the ABC transporter domain. An ATP-binding site is contributed by 495 to 502 (GPNGSGKS). Residues 779 to 789 (KQQTNNKSNII) are compositionally biased toward polar residues. Positions 779–834 (KQQTNNKSNIINNNNNNNNNNNNNNNNNNNNNNNNNNNNNNNNNTNNNTNNNQLIN) are disordered. Residues 790–834 (NNNNNNNNNNNNNNNNNNNNNNNNNNNNNNNNNTNNNTNNNQLIN) are compositionally biased toward low complexity.

Belongs to the ABC transporter superfamily. ABCA family.

The protein resides in the membrane. This Dictyostelium discoideum (Social amoeba) protein is ABC transporter A family member 11 (abcA11).